The following is a 513-amino-acid chain: Maturase K (513 aa).

This sequence belongs to the intron maturase 2 family. MatK subfamily.

The protein localises to the plastid. The protein resides in the chloroplast. In terms of biological role, usually encoded in the trnK tRNA gene intron. Probably assists in splicing its own and other chloroplast group II introns. In Keckiella cordifolia (Heart-leafed penstemon), this protein is Maturase K.